Consider the following 277-residue polypeptide: Large ribosomal subunit protein uL2 (277 aa).

Residues 219–277 (TVRGSVMNPNDHPHGGGEGKAPVGRKAPSTPWGKPALGLKTRNKKAKSDKLIVRRRNQK) are disordered.

Belongs to the universal ribosomal protein uL2 family. Part of the 50S ribosomal subunit. Forms a bridge to the 30S subunit in the 70S ribosome.

Functionally, one of the primary rRNA binding proteins. Required for association of the 30S and 50S subunits to form the 70S ribosome, for tRNA binding and peptide bond formation. It has been suggested to have peptidyltransferase activity; this is somewhat controversial. Makes several contacts with the 16S rRNA in the 70S ribosome. The chain is Large ribosomal subunit protein uL2 from Streptococcus suis (strain 98HAH33).